Here is a 359-residue protein sequence, read N- to C-terminus: Dual-specificity RNA methyltransferase RlmN (359 aa).

Catalysis depends on Glu86, which acts as the Proton acceptor. The 234-residue stretch at Glu105–Asp338 folds into the Radical SAM core domain. Cys112 and Cys343 are joined by a disulfide. [4Fe-4S] cluster contacts are provided by Cys119, Cys123, and Cys126. S-adenosyl-L-methionine is bound by residues Gly169 to Glu170, Ser201, Ser224 to His226, and Asn300. Cys343 functions as the S-methylcysteine intermediate in the catalytic mechanism.

Belongs to the radical SAM superfamily. RlmN family. [4Fe-4S] cluster serves as cofactor.

It is found in the cytoplasm. It carries out the reaction adenosine(2503) in 23S rRNA + 2 reduced [2Fe-2S]-[ferredoxin] + 2 S-adenosyl-L-methionine = 2-methyladenosine(2503) in 23S rRNA + 5'-deoxyadenosine + L-methionine + 2 oxidized [2Fe-2S]-[ferredoxin] + S-adenosyl-L-homocysteine. The enzyme catalyses adenosine(37) in tRNA + 2 reduced [2Fe-2S]-[ferredoxin] + 2 S-adenosyl-L-methionine = 2-methyladenosine(37) in tRNA + 5'-deoxyadenosine + L-methionine + 2 oxidized [2Fe-2S]-[ferredoxin] + S-adenosyl-L-homocysteine. Specifically methylates position 2 of adenine 2503 in 23S rRNA and position 2 of adenine 37 in tRNAs. m2A2503 modification seems to play a crucial role in the proofreading step occurring at the peptidyl transferase center and thus would serve to optimize ribosomal fidelity. The protein is Dual-specificity RNA methyltransferase RlmN of Wolinella succinogenes (strain ATCC 29543 / DSM 1740 / CCUG 13145 / JCM 31913 / LMG 7466 / NCTC 11488 / FDC 602W) (Vibrio succinogenes).